Reading from the N-terminus, the 216-residue chain is Small ribosomal subunit protein uS3c (216 aa).

The region spanning 43–118 (IKNYIQKNRR…KLNIAIVKVT (76 aa)) is the KH type-2 domain.

This sequence belongs to the universal ribosomal protein uS3 family. As to quaternary structure, part of the 30S ribosomal subunit.

Its subcellular location is the plastid. The protein resides in the chloroplast. The polypeptide is Small ribosomal subunit protein uS3c (rps3) (Phaseolus angularis (Azuki bean)).